Reading from the N-terminus, the 777-residue chain is Reticulon-1 (777 aa).

Disordered stretches follow at residues 1-77 (MAAP…ETAS), 129-182 (NGHI…ILAD), 198-245 (TRPQ…PVEG), and 293-573 (ATHE…IPGP). 2 positions are modified to phosphoserine: serine 13 and serine 68. Basic and acidic residues predominate over residues 199–233 (RPQEAKGQEEQSPGLEDKDLDFKDKDSEVSTKPEG). Phosphoserine is present on residues serine 210, serine 241, and serine 325. Residues 326–339 (PGSVTPPSSGTEPS) show a composition bias toward low complexity. Phosphoserine is present on residues serine 348 and serine 350. Residues 393 to 406 (IPSSLDQEASSAES) show a composition bias toward polar residues. Residue serine 485 is modified to Phosphoserine. The segment covering 495–510 (AIREETSSRATEERAP) has biased composition (basic and acidic residues). A compositionally biased stretch (polar residues) spans 525–534 (TPVTLQSRPE). In terms of domain architecture, Reticulon spans 590-777 (AIDLLYWRDI…KIPGAKRHAE (188 aa)). 2 helical membrane passes run 604–624 (IVFG…VVSV) and 706–726 (FAVL…LTLL).

Interacts with NDRG1. Interacts with BACE1. Interacts with TMEM33. As to quaternary structure, interacts with UGCG; regulates the ceramide glucosyltransferase activity of UGCG. In terms of tissue distribution, expressed predominantly in central and peripheral nervous system of newborn and adult rats. Low levels have been also detected in heart, adrenal gland and spleen. Expression of isoform RTN1-B is restricted to particular neuronal types.

Its subcellular location is the endoplasmic reticulum membrane. It localises to the golgi apparatus membrane. In terms of biological role, inhibits amyloid precursor protein processing, probably by blocking BACE1 activity. In Rattus norvegicus (Rat), this protein is Reticulon-1 (Rtn1).